We begin with the raw amino-acid sequence, 286 residues long: uncharacterized protein (286 aa).

This is an uncharacterized protein from Schizosaccharomyces pombe (strain 972 / ATCC 24843) (Fission yeast).